The chain runs to 673 residues: UvrABC system protein B (673 aa).

The 387-residue stretch at 28-414 folds into the Helicase ATP-binding domain; that stretch reads ASILQNKRSQ…EAGGEIVEQL (387 aa). 41 to 48 is a binding site for ATP; sequence GITGSGKT. The Beta-hairpin motif lies at 94–117; that stretch reads YYDYYQPEAYVPRTDTYIEKDMSI. The region spanning 433–595 is the Helicase C-terminal domain; the sequence is QVDDCLAEIR…ITPRTVKREI (163 aa). Positions 633-668 constitute a UVR domain; sequence RLKIKECEKEMKKAAKEFRFEEAADWRDQMRRYQQI.

The protein belongs to the UvrB family. As to quaternary structure, forms a heterotetramer with UvrA during the search for lesions. Interacts with UvrC in an incision complex.

The protein localises to the cytoplasm. Its function is as follows. The UvrABC repair system catalyzes the recognition and processing of DNA lesions. A damage recognition complex composed of 2 UvrA and 2 UvrB subunits scans DNA for abnormalities. Upon binding of the UvrA(2)B(2) complex to a putative damaged site, the DNA wraps around one UvrB monomer. DNA wrap is dependent on ATP binding by UvrB and probably causes local melting of the DNA helix, facilitating insertion of UvrB beta-hairpin between the DNA strands. Then UvrB probes one DNA strand for the presence of a lesion. If a lesion is found the UvrA subunits dissociate and the UvrB-DNA preincision complex is formed. This complex is subsequently bound by UvrC and the second UvrB is released. If no lesion is found, the DNA wraps around the other UvrB subunit that will check the other stand for damage. In Protochlamydia amoebophila (strain UWE25), this protein is UvrABC system protein B.